Consider the following 375-residue polypeptide: Putative type I specificity subunit S.MpnORF638P (375 aa).

This sequence belongs to the type-I restriction system S methylase family. In terms of assembly, the methyltransferase is composed of M and S polypeptides.

The specificity (S) subunit of a type I methyltransferase (MTase); this subunit dictates DNA sequence specificity. The single R subunit has multiple frameshifts and is probably not expressed. The polypeptide is Putative type I specificity subunit S.MpnORF638P (Mycoplasma pneumoniae (strain ATCC 29342 / M129 / Subtype 1) (Mycoplasmoides pneumoniae)).